The primary structure comprises 111 residues: Nucleoid-associated protein NMCC_1355 (111 aa).

The protein belongs to the YbaB/EbfC family. In terms of assembly, homodimer.

It is found in the cytoplasm. The protein localises to the nucleoid. Functionally, binds to DNA and alters its conformation. May be involved in regulation of gene expression, nucleoid organization and DNA protection. This is Nucleoid-associated protein NMCC_1355 from Neisseria meningitidis serogroup C (strain 053442).